The following is a 408-amino-acid chain: Argininosuccinate synthase (408 aa).

Residues 8–16 (AYSGGLDTT) and Ala-35 each bind ATP. Tyr-86 and Ser-91 together coordinate L-citrulline. Gly-116 is a binding site for ATP. L-aspartate is bound by residues Thr-118, Asn-122, and Asp-123. Asn-122 serves as a coordination point for L-citrulline. Residues Arg-126, Ser-177, Ser-186, Glu-263, and Tyr-275 each coordinate L-citrulline.

Belongs to the argininosuccinate synthase family. Type 1 subfamily. As to quaternary structure, homotetramer.

The protein localises to the cytoplasm. It carries out the reaction L-citrulline + L-aspartate + ATP = 2-(N(omega)-L-arginino)succinate + AMP + diphosphate + H(+). It functions in the pathway amino-acid biosynthesis; L-arginine biosynthesis; L-arginine from L-ornithine and carbamoyl phosphate: step 2/3. This Lachnospira eligens (strain ATCC 27750 / DSM 3376 / VPI C15-48 / C15-B4) (Eubacterium eligens) protein is Argininosuccinate synthase.